We begin with the raw amino-acid sequence, 190 residues long: Cytoplasmic envelopment protein 3 (190 aa).

Residue Gly-2 is the site of N-myristoyl glycine; by host attachment. Positions 27–190 are disordered; it reads RQVSLRSYDN…TKKPAASLPF (164 aa). Over residues 30–43 the composition is skewed to polar residues; sequence SLRSYDNIPPTSSS. Over residues 44 to 58 the composition is skewed to acidic residues; it reads DEGEDDDDGEDDDNE. Residues 80–90 are compositionally biased toward basic and acidic residues; that stretch reads SHREATHDGSK. Over residues 108–123 the composition is skewed to basic residues; it reads KQSKKKKKPSKHHHHQ. Residues 130–139 are compositionally biased toward acidic residues; sequence ETDDLDEEDT.

The protein belongs to the herpesviridae cytoplasmic envelopment protein 3 family. As to quaternary structure, interacts with cytoplasmic envelopment protein 2; this interaction is essential for the proper localization of each protein to the assembly complex and thus for the production of infectious virus. Post-translationally, myristoylation and palmitoylation (probably on one or more of the nearby cysteines at the N-terminus) enable membrane-binding and Golgi apparatus-specific targeting and are essential for efficient packaging. Phosphorylated. Phosphorylation does not seem to be required for recycling to the host Golgi apparatus. Packaging is selective for underphosphorylated forms.

Its subcellular location is the virion tegument. The protein localises to the virion membrane. It is found in the host cell membrane. It localises to the host Golgi apparatus membrane. In terms of biological role, plays an important role in the cytoplasmic envelopment of tegument proteins and capsids during the assembly and egress processes. Also participates in viral entry at the fusion step probably by regulating the core fusion machinery. This is Cytoplasmic envelopment protein 3 (UL99) from Human cytomegalovirus (strain AD169) (HHV-5).